We begin with the raw amino-acid sequence, 280 residues long: UDP-3-O-acyl-N-acetylglucosamine deacetylase (280 aa).

Zn(2+) is bound by residues histidine 79, histidine 237, and aspartate 241. The active-site Proton donor is the histidine 264.

This sequence belongs to the LpxC family. It depends on Zn(2+) as a cofactor.

It carries out the reaction a UDP-3-O-[(3R)-3-hydroxyacyl]-N-acetyl-alpha-D-glucosamine + H2O = a UDP-3-O-[(3R)-3-hydroxyacyl]-alpha-D-glucosamine + acetate. Its pathway is glycolipid biosynthesis; lipid IV(A) biosynthesis; lipid IV(A) from (3R)-3-hydroxytetradecanoyl-[acyl-carrier-protein] and UDP-N-acetyl-alpha-D-glucosamine: step 2/6. Its function is as follows. Catalyzes the hydrolysis of UDP-3-O-myristoyl-N-acetylglucosamine to form UDP-3-O-myristoylglucosamine and acetate, the committed step in lipid A biosynthesis. The chain is UDP-3-O-acyl-N-acetylglucosamine deacetylase from Chlamydia abortus (strain DSM 27085 / S26/3) (Chlamydophila abortus).